The primary structure comprises 489 residues: GTPase Der (489 aa).

2 EngA-type G domains span residues 3–166 (PVIA…PKDE) and 195–368 (IKIA…KSAV). GTP is bound by residues 9–16 (GRPNVGKS), 56–60 (DTGGI), 118–121 (NKID), 201–208 (GRPNVGKS), 248–252 (DTAGV), and 313–316 (NKWD). The KH-like domain occupies 369–453 (TRWPTSRLTQ…PIRIEFKGGE (85 aa)). Residues 451-489 (GGENPYEGNKNTLTDRQVNKKRRMMSHHKKADKKRRDKR) form a disordered region. Residues 469–489 (NKKRRMMSHHKKADKKRRDKR) are compositionally biased toward basic residues.

This sequence belongs to the TRAFAC class TrmE-Era-EngA-EngB-Septin-like GTPase superfamily. EngA (Der) GTPase family. As to quaternary structure, associates with the 50S ribosomal subunit.

Functionally, GTPase that plays an essential role in the late steps of ribosome biogenesis. The protein is GTPase Der of Pseudomonas syringae pv. tomato (strain ATCC BAA-871 / DC3000).